We begin with the raw amino-acid sequence, 273 residues long: 1,4-dihydroxy-2-naphthoyl-CoA synthase (273 aa).

Substrate is bound by residues Arg-34, 73-77 (SGGDQ), Tyr-85, 117-121 (YAVGG), Thr-143, Ser-149, Tyr-246, and Lys-261. Residue 142-144 (QTG) participates in hydrogencarbonate binding. Basic and acidic residues predominate over residues 254 to 265 (GRDAFKEKRDPD). Residues 254–273 (GRDAFKEKRDPDFDQFPKFP) form a disordered region.

Belongs to the enoyl-CoA hydratase/isomerase family. MenB subfamily. Requires hydrogencarbonate as cofactor.

The catalysed reaction is 2-succinylbenzoyl-CoA + H(+) = 1,4-dihydroxy-2-naphthoyl-CoA + H2O. The protein operates within quinol/quinone metabolism; 1,4-dihydroxy-2-naphthoate biosynthesis; 1,4-dihydroxy-2-naphthoate from chorismate: step 6/7. It participates in quinol/quinone metabolism; menaquinone biosynthesis. Its function is as follows. Converts o-succinylbenzoyl-CoA (OSB-CoA) to 1,4-dihydroxy-2-naphthoyl-CoA (DHNA-CoA). In Staphylococcus aureus (strain Mu50 / ATCC 700699), this protein is 1,4-dihydroxy-2-naphthoyl-CoA synthase.